The sequence spans 740 residues: Ion-translocating oxidoreductase complex subunit C (740 aa).

4Fe-4S ferredoxin-type domains are found at residues 369-397 and 407-436; these read GEPQ…QQLY and KATT…VQYF. 8 residues coordinate [4Fe-4S] cluster: Cys377, Cys380, Cys383, Cys387, Cys416, Cys419, Cys422, and Cys426. The tract at residues 602–716 is disordered; that stretch reads KLEQQQANAE…EPEEQVDPRK (115 aa).

The protein belongs to the 4Fe4S bacterial-type ferredoxin family. RnfC subfamily. As to quaternary structure, the complex is composed of six subunits: RsxA, RsxB, RsxC, RsxD, RsxE and RsxG. The cofactor is [4Fe-4S] cluster.

The protein localises to the cell inner membrane. Functionally, part of a membrane-bound complex that couples electron transfer with translocation of ions across the membrane. Required to maintain the reduced state of SoxR. This Escherichia coli O139:H28 (strain E24377A / ETEC) protein is Ion-translocating oxidoreductase complex subunit C.